Here is a 196-residue protein sequence, read N- to C-terminus: Rho-related GTP-binding protein RhoB (196 aa).

A GTP-binding site is contributed by 12–19 (GDGACGKT). Y34 carries O-linked (GlcNAc) tyrosine; by Photorhabdus PAU_02230 glycosylation. The short motif at 34 to 42 (YVPTVFENY) is the Effector region element. T37 is a glycosylation site ((Microbial infection) O-linked (Glc) threonine; by C.difficile toxins TcdA and TcdB). N41 bears the ADP-ribosylasparagine; by botulinum toxin mark. Residues 59–63 (DTAGQ) and 117–120 (NKKD) each bind GTP. Y154 is modified (phosphotyrosine). Residues C189 and C192 are each lipidated (S-palmitoyl cysteine). C193 carries the post-translational modification Cysteine methyl ester. C193 carries the S-farnesyl cysteine; in plasma membrane form lipid modification. Residue C193 is the site of S-geranylgeranyl cysteine; in endosomal form attachment. Positions 194–196 (KVL) are cleaved as a propeptide — removed in mature form.

The protein belongs to the small GTPase superfamily. Rho family. Binds ROCK1 and ROCK2. Also binds PKN1/PRK1. Interacts with ARGGEF3. Interacts with RTKN. Interacts with AKAP13. Interacts with RIPOR1. Prenylation specifies the subcellular location of RHOB. The farnesylated form is localized to the plasma membrane while the geranylgeranylated form is localized to the endosome. In terms of processing, (Microbial infection) Glycosylated at Tyr-34 by Photorhabdus asymbiotica toxin PAU_02230. Mono-O-GlcNAcylation by PAU_02230 inhibits downstream signaling by an impaired interaction with diverse regulator and effector proteins of Rho and leads to actin disassembly. Post-translationally, (Microbial infection) Glucosylated at Thr-37 by C.difficile toxins TcdA and TcdB in the colonic epithelium. Monoglucosylation completely prevents the recognition of the downstream effector, blocking the GTPases in their inactive form, leading to actin cytoskeleton disruption.

The protein resides in the late endosome membrane. The protein localises to the cell membrane. Its subcellular location is the nucleus. It is found in the cleavage furrow. Mediates apoptosis in neoplastically transformed cells after DNA damage. Not essential for development but affects cell adhesion and growth factor signaling in transformed cells. Plays a negative role in tumorigenesis as deletion causes tumor formation. Involved in intracellular protein trafficking of a number of proteins. Targets PKN1 to endosomes and is involved in trafficking of the EGF receptor from late endosomes to lysosomes. Also required for stability and nuclear trafficking of AKT1/AKT which promotes endothelial cell survival during vascular development. Serves as a microtubule-dependent signal that is required for the myosin contractile ring formation during cell cycle cytokinesis. Required for genotoxic stress-induced cell death in breast cancer cells. The chain is Rho-related GTP-binding protein RhoB (RHOB) from Homo sapiens (Human).